The sequence spans 130 residues: Small ribosomal subunit protein uS9 (130 aa).

Belongs to the universal ribosomal protein uS9 family.

The polypeptide is Small ribosomal subunit protein uS9 (Yersinia enterocolitica serotype O:8 / biotype 1B (strain NCTC 13174 / 8081)).